We begin with the raw amino-acid sequence, 294 residues long: Cytosolic Fe-S cluster assembly factor CFD1 (294 aa).

G25 to S32 serves as a coordination point for ATP. [4Fe-4S] cluster-binding residues include C214 and C217.

The protein belongs to the Mrp/NBP35 ATP-binding proteins family. NUBP2/CFD1 subfamily. In terms of assembly, heterotetramer of 2 NBP35 and 2 CFD1 chains. [4Fe-4S] cluster is required as a cofactor.

It localises to the cytoplasm. Component of the cytosolic iron-sulfur (Fe/S) protein assembly (CIA) machinery. Required for maturation of extramitochondrial Fe-S proteins. The NBP35-CFD1 heterotetramer forms a Fe-S scaffold complex, mediating the de novo assembly of an Fe-S cluster and its transfer to target apoproteins. Required for biogenesis and export of both ribosomal subunits, which may reflect a role in assembly of the Fe/S clusters in RLI1, a protein which performs rRNA processing and ribosome export. In Candida albicans (strain SC5314 / ATCC MYA-2876) (Yeast), this protein is Cytosolic Fe-S cluster assembly factor CFD1.